The following is an 805-amino-acid chain: Phenylalanine--tRNA ligase beta subunit (805 aa).

Positions V39–I155 constitute a tRNA-binding domain. The B5 domain maps to D408–G479. Residues D457, D463, E466, and E467 each contribute to the Mg(2+) site. The FDX-ACB domain occupies S707–R804.

The protein belongs to the phenylalanyl-tRNA synthetase beta subunit family. Type 1 subfamily. Tetramer of two alpha and two beta subunits. The cofactor is Mg(2+).

It is found in the cytoplasm. The catalysed reaction is tRNA(Phe) + L-phenylalanine + ATP = L-phenylalanyl-tRNA(Phe) + AMP + diphosphate + H(+). This Cereibacter sphaeroides (strain ATCC 17023 / DSM 158 / JCM 6121 / CCUG 31486 / LMG 2827 / NBRC 12203 / NCIMB 8253 / ATH 2.4.1.) (Rhodobacter sphaeroides) protein is Phenylalanine--tRNA ligase beta subunit.